A 35-amino-acid chain; its full sequence is Conotoxin Ca15a (35 aa).

Pro-8 bears the 4-hydroxyproline mark.

Post-translationally, contains 4 disulfide bonds. As to expression, expressed by the venom duct.

The protein localises to the secreted. This is Conotoxin Ca15a from Conus caracteristicus (Characteristic cone).